A 466-amino-acid polypeptide reads, in one-letter code: 3-isopropylmalate dehydratase large subunit (466 aa).

[4Fe-4S] cluster contacts are provided by Cys-347, Cys-407, and Cys-410.

Belongs to the aconitase/IPM isomerase family. LeuC type 1 subfamily. In terms of assembly, heterodimer of LeuC and LeuD. The cofactor is [4Fe-4S] cluster.

It carries out the reaction (2R,3S)-3-isopropylmalate = (2S)-2-isopropylmalate. It participates in amino-acid biosynthesis; L-leucine biosynthesis; L-leucine from 3-methyl-2-oxobutanoate: step 2/4. In terms of biological role, catalyzes the isomerization between 2-isopropylmalate and 3-isopropylmalate, via the formation of 2-isopropylmaleate. This Shewanella pealeana (strain ATCC 700345 / ANG-SQ1) protein is 3-isopropylmalate dehydratase large subunit.